A 143-amino-acid polypeptide reads, in one-letter code: ATP synthase subunit b' (143 aa).

A helical transmembrane segment spans residues 6-26 (ATLPLMALQFVLLAIILNAIF).

The protein belongs to the ATPase B chain family. As to quaternary structure, F-type ATPases have 2 components, F(1) - the catalytic core - and F(0) - the membrane proton channel. F(1) has five subunits: alpha(3), beta(3), gamma(1), delta(1), epsilon(1). F(0) has four main subunits: a(1), b(1), b'(1) and c(10-14). The alpha and beta chains form an alternating ring which encloses part of the gamma chain. F(1) is attached to F(0) by a central stalk formed by the gamma and epsilon chains, while a peripheral stalk is formed by the delta, b and b' chains.

Its subcellular location is the cellular thylakoid membrane. Its function is as follows. F(1)F(0) ATP synthase produces ATP from ADP in the presence of a proton or sodium gradient. F-type ATPases consist of two structural domains, F(1) containing the extramembraneous catalytic core and F(0) containing the membrane proton channel, linked together by a central stalk and a peripheral stalk. During catalysis, ATP synthesis in the catalytic domain of F(1) is coupled via a rotary mechanism of the central stalk subunits to proton translocation. Functionally, component of the F(0) channel, it forms part of the peripheral stalk, linking F(1) to F(0). The b'-subunit is a diverged and duplicated form of b found in plants and photosynthetic bacteria. The protein is ATP synthase subunit b' of Crocosphaera subtropica (strain ATCC 51142 / BH68) (Cyanothece sp. (strain ATCC 51142)).